Consider the following 407-residue polypeptide: Pyridinium-3,5-bisthiocarboxylic acid mononucleotide nickel insertion protein (407 aa).

Belongs to the LarC family.

The enzyme catalyses Ni(II)-pyridinium-3,5-bisthiocarboxylate mononucleotide = pyridinium-3,5-bisthiocarboxylate mononucleotide + Ni(2+). Its function is as follows. Involved in the biosynthesis of a nickel-pincer cofactor ((SCS)Ni(II) pincer complex). Binds Ni(2+), and functions in nickel delivery to pyridinium-3,5-bisthiocarboxylic acid mononucleotide (P2TMN), to form the mature cofactor. Is thus probably required for the activation of nickel-pincer cofactor-dependent enzymes. This is Pyridinium-3,5-bisthiocarboxylic acid mononucleotide nickel insertion protein from Acetivibrio thermocellus (strain ATCC 27405 / DSM 1237 / JCM 9322 / NBRC 103400 / NCIMB 10682 / NRRL B-4536 / VPI 7372) (Clostridium thermocellum).